We begin with the raw amino-acid sequence, 952 residues long: Glycine dehydrogenase (decarboxylating) (952 aa).

Lys703 carries the post-translational modification N6-(pyridoxal phosphate)lysine.

The protein belongs to the GcvP family. In terms of assembly, the glycine cleavage system is composed of four proteins: P, T, L and H. Requires pyridoxal 5'-phosphate as cofactor.

The catalysed reaction is N(6)-[(R)-lipoyl]-L-lysyl-[glycine-cleavage complex H protein] + glycine + H(+) = N(6)-[(R)-S(8)-aminomethyldihydrolipoyl]-L-lysyl-[glycine-cleavage complex H protein] + CO2. Its function is as follows. The glycine cleavage system catalyzes the degradation of glycine. The P protein binds the alpha-amino group of glycine through its pyridoxal phosphate cofactor; CO(2) is released and the remaining methylamine moiety is then transferred to the lipoamide cofactor of the H protein. The protein is Glycine dehydrogenase (decarboxylating) of Mycolicibacterium gilvum (strain PYR-GCK) (Mycobacterium gilvum (strain PYR-GCK)).